The sequence spans 226 residues: Leucyl/phenylalanyl-tRNA--protein transferase (226 aa).

The protein belongs to the L/F-transferase family.

It localises to the cytoplasm. It catalyses the reaction N-terminal L-lysyl-[protein] + L-leucyl-tRNA(Leu) = N-terminal L-leucyl-L-lysyl-[protein] + tRNA(Leu) + H(+). It carries out the reaction N-terminal L-arginyl-[protein] + L-leucyl-tRNA(Leu) = N-terminal L-leucyl-L-arginyl-[protein] + tRNA(Leu) + H(+). The enzyme catalyses L-phenylalanyl-tRNA(Phe) + an N-terminal L-alpha-aminoacyl-[protein] = an N-terminal L-phenylalanyl-L-alpha-aminoacyl-[protein] + tRNA(Phe). Functions in the N-end rule pathway of protein degradation where it conjugates Leu, Phe and, less efficiently, Met from aminoacyl-tRNAs to the N-termini of proteins containing an N-terminal arginine or lysine. The chain is Leucyl/phenylalanyl-tRNA--protein transferase from Pseudomonas entomophila (strain L48).